Consider the following 298-residue polypeptide: Craniofacial development protein 1 (298 aa).

3 stretches are compositionally biased toward acidic residues: residues methionine 1 to tyrosine 18, tyrosine 25 to glutamate 43, and leucine 70 to glutamate 80. Disordered regions lie at residues methionine 1–glutamate 158 and phenylalanine 191–methionine 223. Phosphoserine is present on residues serine 82, serine 85, and serine 86. The span at lysine 98 to glutamate 112 shows a compositional bias: basic and acidic residues. Residue serine 116 is modified to Phosphoserine. 2 stretches are compositionally biased toward basic and acidic residues: residues valine 148–glutamate 158 and phenylalanine 191–proline 200. Lysine 149 participates in a covalent cross-link: Glycyl lysine isopeptide (Lys-Gly) (interchain with G-Cter in SUMO2). Residues valine 177 to glycine 216 form a hydrophilic region. The span at serine 205–leucine 217 shows a compositional bias: low complexity. Serine 215 is subject to Phosphoserine. A BCNT-C domain is found at leucine 217 to proline 298. Lysine 218 carries the N6-methyllysine modification. Phosphoserine is present on serine 249.

The protein localises to the chromosome. Its subcellular location is the centromere. It is found in the kinetochore. In terms of biological role, may play a role during embryogenesis. The polypeptide is Craniofacial development protein 1 (CFDP1) (Muntiacus reevesi (Reeves' muntjac)).